A 267-amino-acid chain; its full sequence is Small ribosomal subunit protein uS2 (267 aa).

Positions 226–267 (AAAPNSASVREEEFSAESADEGKGRRAPAKKGEKKADAPAAE) are disordered. A compositionally biased stretch (basic and acidic residues) spans 245-267 (DEGKGRRAPAKKGEKKADAPAAE).

This sequence belongs to the universal ribosomal protein uS2 family.

This is Small ribosomal subunit protein uS2 from Xanthomonas oryzae pv. oryzae (strain MAFF 311018).